The primary structure comprises 183 residues: Inner membrane-spanning protein YciB (183 aa).

A run of 5 helical transmembrane segments spans residues 19–39 (LYGVQQAAITLVIATVIQLIV), 53–73 (IMGIFVVFFGILTAYFNDLNF), 76–96 (WKVTIINGLFAAVLLVSQFVF), 121–141 (LGWAGFFIICMLLNIVISYYF), and 151–171 (TFGFTGLSLIAAIATGVYLYP).

It belongs to the YciB family.

The protein localises to the cell inner membrane. In terms of biological role, plays a role in cell envelope biogenesis, maintenance of cell envelope integrity and membrane homeostasis. The polypeptide is Inner membrane-spanning protein YciB (Actinobacillus pleuropneumoniae serotype 3 (strain JL03)).